We begin with the raw amino-acid sequence, 121 residues long: UPF0738 protein RBAM_011600 (121 aa).

This sequence belongs to the UPF0738 family.

In Bacillus velezensis (strain DSM 23117 / BGSC 10A6 / LMG 26770 / FZB42) (Bacillus amyloliquefaciens subsp. plantarum), this protein is UPF0738 protein RBAM_011600.